The sequence spans 298 residues: Replication protein A 32 kDa subunit B (298 aa).

The OB DNA-binding region spans 89–163 (VRLVGRMLNK…QVVAYSVRRI (75 aa)).

This sequence belongs to the replication factor A protein 2 family. Heterotrimer of RPA1, RPA2 and RPA3 (canonical replication protein A complex). Interacts with RPA1A and RPA3. Post-translationally, phosphorylated in a cell-cycle-dependent manner (from the S phase until mitosis). In response to DNA damage, recruited to DNA-repair nuclear foci, as a hypophosphorylated form.

Its subcellular location is the nucleus. Functionally, component of the replication protein A complex (RPA) required for DNA recombination, repair and replication. The activity of RPA is mediated by single-stranded DNA binding and protein interactions. The protein is Replication protein A 32 kDa subunit B (RPA2B) of Oryza sativa subsp. japonica (Rice).